The chain runs to 336 residues: GTPase Obg (336 aa).

The Obg domain maps to 1–159 (MKFLDQAKIY…RWVWLRLKLI (159 aa)). Positions 160 to 328 (ADIGLVGLPN…LLRLLQDRVT (169 aa)) constitute an OBG-type G domain. Residues 166-173 (GLPNAGKS), 191-195 (FTTLH), 213-216 (DIPG), 280-283 (NKCD), and 309-311 (SGA) each bind GTP. Ser-173 and Thr-193 together coordinate Mg(2+).

This sequence belongs to the TRAFAC class OBG-HflX-like GTPase superfamily. OBG GTPase family. In terms of assembly, monomer. Requires Mg(2+) as cofactor.

The protein localises to the cytoplasm. Functionally, an essential GTPase which binds GTP, GDP and possibly (p)ppGpp with moderate affinity, with high nucleotide exchange rates and a fairly low GTP hydrolysis rate. Plays a role in control of the cell cycle, stress response, ribosome biogenesis and in those bacteria that undergo differentiation, in morphogenesis control. The polypeptide is GTPase Obg (Gluconobacter oxydans (strain 621H) (Gluconobacter suboxydans)).